A 196-amino-acid polypeptide reads, in one-letter code: Small ribosomal subunit protein uS4c (196 aa).

In terms of domain architecture, S4 RNA-binding spans 89–149 (MRLDNILFRL…DKQRSKALIQ (61 aa)).

Belongs to the universal ribosomal protein uS4 family. In terms of assembly, part of the 30S ribosomal subunit. Contacts protein S5. The interaction surface between S4 and S5 is involved in control of translational fidelity.

Its subcellular location is the plastid. The protein localises to the chloroplast. In terms of biological role, one of the primary rRNA binding proteins, it binds directly to 16S rRNA where it nucleates assembly of the body of the 30S subunit. Its function is as follows. With S5 and S12 plays an important role in translational accuracy. This is Small ribosomal subunit protein uS4c (rps4) from Asparagus maritimus (Sea asparagus).